The following is a 145-amino-acid chain: 3-hydroxyacyl-[acyl-carrier-protein] dehydratase FabZ (145 aa).

Residue histidine 49 is part of the active site.

Belongs to the thioester dehydratase family. FabZ subfamily.

The protein resides in the cytoplasm. It catalyses the reaction a (3R)-hydroxyacyl-[ACP] = a (2E)-enoyl-[ACP] + H2O. Functionally, involved in unsaturated fatty acids biosynthesis. Catalyzes the dehydration of short chain beta-hydroxyacyl-ACPs and long chain saturated and unsaturated beta-hydroxyacyl-ACPs. The chain is 3-hydroxyacyl-[acyl-carrier-protein] dehydratase FabZ from Rickettsia bellii (strain OSU 85-389).